The sequence spans 742 residues: Transcription factor FFUJ_09177 (742 aa).

A DNA-binding region (zn(2)-C6 fungal-type) is located at residues 15–41 (CVSCARSKQRCDGHSPCGRCSLKNLDC). 2 disordered regions span residues 50-80 (GQNS…VQSQ) and 218-244 (HSLD…SVRD). Residues 218–240 (HSLDISSYQGQSNQTSPETTSHS) are compositionally biased toward polar residues.

It localises to the nucleus. Its function is as follows. Transcription factor; part of the DMATS1 gene cluster that mediates the biosynthesis of a reversely N-prenylated monomeric L-tryptophan (r-N-DMAT). Seems not to regulate the expression of the DMATS1 cluster. The protein is Transcription factor FFUJ_09177 of Gibberella fujikuroi (strain CBS 195.34 / IMI 58289 / NRRL A-6831) (Bakanae and foot rot disease fungus).